The sequence spans 175 residues: VQ motif-containing protein 25 (175 aa).

The VQ motif lies at F50–G59.

The protein localises to the nucleus. In terms of biological role, may function as negative regulator of plant defense. This is VQ motif-containing protein 25 from Arabidopsis thaliana (Mouse-ear cress).